A 331-amino-acid chain; its full sequence is Cathepsin S (331 aa).

An N-terminal signal peptide occupies residues 1 to 16 (MNWLVWALLLCSSAMA). Residues 17–114 (HVHRDPTLDH…VTYKSDPNQK (98 aa)) constitute a propeptide, activation peptide. N-linked (GlcNAc...) asparagine glycosylation occurs at Asn104. 4 cysteine pairs are disulfide-bonded: Cys126-Cys224, Cys136-Cys180, Cys170-Cys213, and Cys272-Cys320. Cys139 is an active-site residue. Residues His278 and Asn298 contribute to the active site.

The protein belongs to the peptidase C1 family. Monomer.

The protein resides in the lysosome. Its subcellular location is the secreted. The protein localises to the cytoplasmic vesicle. It is found in the phagosome. The enzyme catalyses Similar to cathepsin L, but with much less activity on Z-Phe-Arg-|-NHMec, and more activity on the Z-Val-Val-Arg-|-Xaa compound.. In terms of biological role, thiol protease. Key protease responsible for the removal of the invariant chain from MHC class II molecules and MHC class II antigen presentation. The bond-specificity of this proteinase is in part similar to the specificities of cathepsin L. The chain is Cathepsin S (CTSS) from Bos taurus (Bovine).